The chain runs to 454 residues: Ribosomal protein uS12 methylthiotransferase RimO (454 aa).

One can recognise an MTTase N-terminal domain in the interval 14–125; it reads SKIAFSHVGC…IAKVLDRVEK (112 aa). [4Fe-4S] cluster-binding residues include Cys-23, Cys-59, Cys-88, Cys-163, Cys-167, and Cys-170. The Radical SAM core domain occupies 149-378; sequence DKNKFVAYLR…ISVQQNISRE (230 aa). Residues 381–452 enclose the TRAM domain; it reads QIYVGSKMKI…EYDLYGETIK (72 aa).

Belongs to the methylthiotransferase family. RimO subfamily. Requires [4Fe-4S] cluster as cofactor.

It localises to the cytoplasm. The enzyme catalyses L-aspartate(89)-[ribosomal protein uS12]-hydrogen + (sulfur carrier)-SH + AH2 + 2 S-adenosyl-L-methionine = 3-methylsulfanyl-L-aspartate(89)-[ribosomal protein uS12]-hydrogen + (sulfur carrier)-H + 5'-deoxyadenosine + L-methionine + A + S-adenosyl-L-homocysteine + 2 H(+). Its function is as follows. Catalyzes the methylthiolation of an aspartic acid residue of ribosomal protein uS12. This Prochlorococcus marinus (strain MIT 9301) protein is Ribosomal protein uS12 methylthiotransferase RimO.